Reading from the N-terminus, the 533-residue chain is Light-independent protochlorophyllide reductase subunit B (533 aa).

Aspartate 36 lines the [4Fe-4S] cluster pocket. Catalysis depends on aspartate 292, which acts as the Proton donor. Position 428-429 (428-429 (GL)) interacts with substrate.

The protein belongs to the ChlB/BchB/BchZ family. In terms of assembly, protochlorophyllide reductase is composed of three subunits; BchL, BchN and BchB. Forms a heterotetramer of two BchB and two BchN subunits. The cofactor is [4Fe-4S] cluster.

The catalysed reaction is chlorophyllide a + oxidized 2[4Fe-4S]-[ferredoxin] + 2 ADP + 2 phosphate = protochlorophyllide a + reduced 2[4Fe-4S]-[ferredoxin] + 2 ATP + 2 H2O. Its pathway is porphyrin-containing compound metabolism; bacteriochlorophyll biosynthesis (light-independent). In terms of biological role, component of the dark-operative protochlorophyllide reductase (DPOR) that uses Mg-ATP and reduced ferredoxin to reduce ring D of protochlorophyllide (Pchlide) to form chlorophyllide a (Chlide). This reaction is light-independent. The NB-protein (BchN-BchB) is the catalytic component of the complex. The chain is Light-independent protochlorophyllide reductase subunit B from Prosthecochloris aestuarii (strain DSM 271 / SK 413).